The following is a 419-amino-acid chain: E3 ubiquitin-protein ligase RNFT1 (419 aa).

Residues 1 to 120 (MKLRAQFDRG…SGESDLESGE (120 aa)) form a disordered region. 2 stretches are compositionally biased toward polar residues: residues 31–44 (EPSS…SLTL) and 72–82 (GSSSGSTNGRG). Residues 84 to 102 (TSRRMRTASHSHSHTHGHG) show a composition bias toward basic residues. Transmembrane regions (helical) follow at residues 141-161 (FIVI…AVAV), 187-207 (LHCA…FYTF), 217-237 (FFAN…SVGV), 240-260 (FILK…PCPL), 270-290 (YMLI…PLWF), and 303-323 (VGLT…LLAL). The segment at 352-403 (IREAGDICPICQADFKQPRVLVCQHIFCEECIAQWLNQERTCPLCRTVITDK) is required for ubiquitin ligase activity and for protection against ER stress-induced cell death. The RING-type zinc finger occupies 359–397 (CPICQADFKQPRVLVCQHIFCEECIAQWLNQERTCPLCR).

Its subcellular location is the endoplasmic reticulum membrane. It carries out the reaction S-ubiquitinyl-[E2 ubiquitin-conjugating enzyme]-L-cysteine + [acceptor protein]-L-lysine = [E2 ubiquitin-conjugating enzyme]-L-cysteine + N(6)-ubiquitinyl-[acceptor protein]-L-lysine.. The protein operates within protein modification; protein ubiquitination. Functionally, E3 ubiquitin-protein ligase that acts in the endoplasmic reticulum (ER)-associated degradation (ERAD) pathway, which targets misfolded proteins that accumulate in the endoplasmic reticulum (ER) for ubiquitination and subsequent proteasome-mediated degradation. Protects cells from ER stress-induced apoptosis. The sequence is that of E3 ubiquitin-protein ligase RNFT1 (rnft1) from Danio rerio (Zebrafish).